The chain runs to 257 residues: Imidazole glycerol phosphate synthase subunit HisF (257 aa).

Residues aspartate 11 and aspartate 130 contribute to the active site.

Belongs to the HisA/HisF family. Heterodimer of HisH and HisF.

Its subcellular location is the cytoplasm. It carries out the reaction 5-[(5-phospho-1-deoxy-D-ribulos-1-ylimino)methylamino]-1-(5-phospho-beta-D-ribosyl)imidazole-4-carboxamide + L-glutamine = D-erythro-1-(imidazol-4-yl)glycerol 3-phosphate + 5-amino-1-(5-phospho-beta-D-ribosyl)imidazole-4-carboxamide + L-glutamate + H(+). The protein operates within amino-acid biosynthesis; L-histidine biosynthesis; L-histidine from 5-phospho-alpha-D-ribose 1-diphosphate: step 5/9. IGPS catalyzes the conversion of PRFAR and glutamine to IGP, AICAR and glutamate. The HisF subunit catalyzes the cyclization activity that produces IGP and AICAR from PRFAR using the ammonia provided by the HisH subunit. The protein is Imidazole glycerol phosphate synthase subunit HisF of Afipia carboxidovorans (strain ATCC 49405 / DSM 1227 / KCTC 32145 / OM5) (Oligotropha carboxidovorans).